The primary structure comprises 353 residues: Heterogeneous nuclear ribonucleoprotein D0 (353 aa).

The disordered stretch occupies residues 1–89; it reads MSEEQFGGDG…SSPRHTEAAT (89 aa). Ser2 bears the N-acetylserine mark. Positions 11–42 are enriched in low complexity; the sequence is AAAAATAAVGGSAGEQEGAMVAAAQGAAAAAG. The segment covering 43 to 56 has biased composition (gly residues); sequence SGSGGGSAPGGTEG. Over residues 62–71 the composition is skewed to basic and acidic residues; the sequence is EGAKIDASKN. Residue Ser69 is modified to Phosphoserine. Lys70 participates in a covalent cross-link: Glycyl lysine isopeptide (Lys-Gly) (interchain with G-Cter in SUMO2). Residues Ser78, Ser80, and Ser81 each carry the phosphoserine modification. Thr89 carries the post-translational modification Phosphothreonine. 2 consecutive RRM domains span residues 95–177 and 180–259; these read WKMF…KTKE and KKIF…MSKE. Residue Lys117 is modified to N6-methyllysine. Thr125 is modified (phosphothreonine). Residue Lys127 forms a Glycyl lysine isopeptide (Lys-Gly) (interchain with G-Cter in SUMO2) linkage. An N6-acetyllysine modification is found at Lys163. Position 188 is a phosphoserine (Ser188). Thr191 carries the phosphothreonine modification. A Glycyl lysine isopeptide (Lys-Gly) (interchain with G-Cter in SUMO2) cross-link involves residue Lys195. An N6-acetyllysine mark is found at Lys241 and Lys249. Ser269 is subject to Phosphoserine. Omega-N-methylarginine is present on residues Arg270, Arg276, Arg278, and Arg280. Asymmetric dimethylarginine; alternate is present on Arg343. A Dimethylated arginine; alternate modification is found at Arg343. Residue Arg343 is modified to Omega-N-methylarginine; alternate.

Identified in a IGF2BP1-dependent mRNP granule complex containing untranslated mRNAs. Part of a complex associated with the FOS mCRD domain and consisting of PABPC1, PAIP1, CSDE1/UNR and SYNCRIP. Interacts with IGF2BP2. Interacts with GTPBP1. Interacts with EIF4G1; the interaction requires RNA. Interacts with EIF3B and RPS3. In terms of processing, methylated by PRMT1, in an insulin-dependent manner. The PRMT1-mediated methylation regulates its phosphorylation. Arg-343 is dimethylated, probably to asymmetric dimethylarginine.

It is found in the nucleus. The protein localises to the cytoplasm. Binds with high affinity to RNA molecules that contain AU-rich elements (AREs) found within the 3'-UTR of many proto-oncogenes and cytokine mRNAs. Also binds to double- and single-stranded DNA sequences in a specific manner and functions a transcription factor. Each of the RNA-binding domains specifically can bind solely to a single-stranded non-monotonous 5'-UUAG-3' sequence and also weaker to the single-stranded 5'-TTAGGG-3' telomeric DNA repeat. Binds RNA oligonucleotides with 5'-UUAGGG-3' repeats more tightly than the telomeric single-stranded DNA 5'-TTAGGG-3' repeats. Binding of RRM1 to DNA inhibits the formation of DNA quadruplex structure which may play a role in telomere elongation. May be involved in translationally coupled mRNA turnover. Implicated with other RNA-binding proteins in the cytoplasmic deadenylation/translational and decay interplay of the FOS mRNA mediated by the major coding-region determinant of instability (mCRD) domain. May play a role in the regulation of the rhythmic expression of circadian clock core genes. Directly binds to the 3'UTR of CRY1 mRNA and induces CRY1 rhythmic translation. May also be involved in the regulation of PER2 translation. The protein is Heterogeneous nuclear ribonucleoprotein D0 (Hnrnpd) of Rattus norvegicus (Rat).